The following is a 180-amino-acid chain: Symerythrin (180 aa).

Positions 17–127 form a cross-link, 3-(L-phenylalan-2'-yl)-L-valine (Phe-Val); that stretch reads FQDAVSHNNT…RRALETALEV (111 aa). The Ferritin-like diiron domain maps to 21–180; it reads VSHNNTDANA…RALENLLEVA (160 aa). Fe(3+) is bound by residues glutamate 37, glutamate 40, glutamate 71, glutamate 128, glutamate 131, glutamate 162, and histidine 165.

In terms of assembly, monomer. Fe(3+) is required as a cofactor.

It is found in the plastid. It localises to the cyanelle. In terms of biological role, exhibits oxidase-like and peroxidase-like activities in vitro. The sequence is that of Symerythrin from Cyanophora paradoxa.